The sequence spans 292 residues: G1/S-specific cyclin-D3 (292 aa).

Positions 27–152 constitute a Cyclin N-terminal domain; sequence VLQSLLRLEE…LVLGKLKWDL (126 aa). Residues 256 to 292 are disordered; sequence REAAQTAPSPVPKAPRGSSSQGPSQTSTPTDVTAIHL. Serine 264 and serine 279 each carry phosphoserine. The segment covering 272 to 285 has biased composition (low complexity); sequence GSSSQGPSQTSTPT. Threonine 283 is modified (phosphothreonine).

This sequence belongs to the cyclin family. Cyclin D subfamily. As to quaternary structure, interacts with the CDK4 and CDK6 protein kinases to form a serine/threonine kinase holoenzyme complex. The cyclin subunit imparts substrate specificity to the complex. Interacts with ATF5. Interacts with EIF3K. Component of the ternary complex cyclin D/CDK4/CDKN1B required for nuclear translocation and modulation of CDK4-mediated kinase activity. Can form similar complexes with either CDKN1A or CDKN2A. In terms of processing, phosphorylation at Thr-283 by MAP kinases is required for ubiquitination and degradation by the DCX(AMBRA1) complex. Ubiquitinated by the DCX(AMBRA1) complex during the transition from G1 to S cell phase, leading to its degradation: ubiquitination is dependent on Thr-283 phosphorylation. The DCX(AMBRA1) complex represents the major regulator of CCND3 stability during the G1/S transition. Polyubiquitinated by the SCF(FBXL2) complex, leading to proteasomal degradation.

It localises to the nucleus. The protein resides in the cytoplasm. Functionally, regulatory component of the cyclin D3-CDK4 (DC) complex that phosphorylates and inhibits members of the retinoblastoma (RB) protein family including RB1 and regulates the cell-cycle during G(1)/S transition. Phosphorylation of RB1 allows dissociation of the transcription factor E2F from the RB/E2F complex and the subsequent transcription of E2F target genes which are responsible for the progression through the G(1) phase. Hypophosphorylates RB1 in early G(1) phase. Cyclin D-CDK4 complexes are major integrators of various mitogenenic and antimitogenic signals. Component of the ternary complex, cyclin D3/CDK4/CDKN1B, required for nuclear translocation and activity of the cyclin D-CDK4 complex. Shows transcriptional coactivator activity with ATF5 independently of CDK4. This Mus musculus (Mouse) protein is G1/S-specific cyclin-D3.